We begin with the raw amino-acid sequence, 381 residues long: Neuropeptide Y receptor type 2 (381 aa).

Residues 1 to 35 are disordered; sequence MGPIGAEADENQTVEEMKVEQYGPQTTPRGELVPD. Residues 1-51 lie on the Extracellular side of the membrane; it reads MGPIGAEADENQTVEEMKVEQYGPQTTPRGELVPDPEPELIDSTKLIEVQV. An N-linked (GlcNAc...) asparagine glycan is attached at N11. Residues 52-72 form a helical membrane-spanning segment; the sequence is VLILAYCSIILLGVIGNSLVI. Residues 73–86 lie on the Cytoplasmic side of the membrane; the sequence is HVVIKFKSMRTVTN. A helical membrane pass occupies residues 87–107; sequence FFIANLAVADLLVNTLCLPFT. Residues 108 to 124 are Extracellular-facing; sequence LTYTLMGEWKMGPVLCH. Cysteines 123 and 203 form a disulfide. Residues 125–145 traverse the membrane as a helical segment; the sequence is LVPYAQGLAVQVSTITLTVIA. Residues 146 to 165 are Cytoplasmic-facing; sequence LDRHRCIVYHLESKISKRIS. Residues 166-186 traverse the membrane as a helical segment; the sequence is FLIIGLAWGISALLASPLAIF. Topologically, residues 187–216 are extracellular; the sequence is REYSLIEIIPDFEIVACTEKWPGEEKSIYG. A helical membrane pass occupies residues 217-237; that stretch reads TVYSLSSLLILYVLPLGIISF. The Cytoplasmic portion of the chain corresponds to 238–268; sequence SYTRIWSKLKNHVSPGAANDHYHQRRQKTTK. A helical membrane pass occupies residues 269-289; the sequence is MLVCVVVVFAVSWLPLHAFQL. Topologically, residues 290–304 are extracellular; it reads AVDIDSQVLDLKEYK. The helical transmembrane segment at 305 to 325 threads the bilayer; the sequence is LIFTVFHIIAMCSTFANPLLY. The Cytoplasmic portion of the chain corresponds to 326–381; the sequence is GWMNSNYRKAFLSAFRCEQRLDAIHSEVSVTFKAKKNLEVRKNSGPNDSFTEATNV. C342 carries S-palmitoyl cysteine lipidation.

This sequence belongs to the G-protein coupled receptor 1 family. In terms of tissue distribution, high levels in amygdala, corpus callosum, hippocampus and subthalamic nucleus. Also detectable in caudate nucleus, hypothalamus and substantia nigra.

It is found in the cell membrane. Its function is as follows. Receptor for neuropeptide Y and peptide YY. The rank order of affinity of this receptor for pancreatic polypeptides is PYY &gt; NPY &gt; PYY (3-36) &gt; NPY (2-36) &gt; [Ile-31, Gln-34] PP &gt; [Leu-31, Pro-34] NPY &gt; PP, [Pro-34] PYY and NPY free acid. This chain is Neuropeptide Y receptor type 2 (NPY2R), found in Homo sapiens (Human).